We begin with the raw amino-acid sequence, 397 residues long: Putative 3'(2'),5'-bisphosphate nucleotidase, mitochondrial (397 aa).

A mitochondrion-targeting transit peptide spans 1 to 16 (MYILDTGARFSAVRFS). The active-site Proton acceptor is D91. Mg(2+) is bound by residues E114, D174, I176, and D177. The active-site Proton acceptor is the T179. Adenosine 3',5'-bisphosphate is bound by residues T179, S305, K308, and D334. 3 residues coordinate AMP: S305, K308, and D334. D334 is a binding site for Mg(2+).

Belongs to the inositol monophosphatase superfamily. Requires Mg(2+) as cofactor.

It is found in the mitochondrion. The catalysed reaction is 3'-phosphoadenylyl sulfate + H2O = adenosine 5'-phosphosulfate + phosphate. It carries out the reaction adenosine 3',5'-bisphosphate + H2O = AMP + phosphate. The enzyme catalyses adenosine 2',5'-bisphosphate + H2O = AMP + phosphate. Its function is as follows. Phosphatase that converts adenosine 3'-phosphate 5'-phosphosulfate (PAPS) to adenosine 5'-phosphosulfate (APS) and 3'(2')-phosphoadenosine 5'-phosphate (PAP) to AMP. This Arabidopsis thaliana (Mouse-ear cress) protein is Putative 3'(2'),5'-bisphosphate nucleotidase, mitochondrial.